A 51-amino-acid polypeptide reads, in one-letter code: Large ribosomal subunit protein eL39 (51 aa).

Belongs to the eukaryotic ribosomal protein eL39 family.

In terms of biological role, binds specifically to a region in 26S rRNA near the subunit interface. In Sulfolobus acidocaldarius (strain ATCC 33909 / DSM 639 / JCM 8929 / NBRC 15157 / NCIMB 11770), this protein is Large ribosomal subunit protein eL39 (rpl39e).